Here is a 436-residue protein sequence, read N- to C-terminus: D-amino acid dehydrogenase (436 aa).

3-17 provides a ligand contact to FAD; the sequence is ILILGSGVIGVTSAW.

The protein belongs to the DadA oxidoreductase family. The cofactor is FAD.

The catalysed reaction is a D-alpha-amino acid + A + H2O = a 2-oxocarboxylate + AH2 + NH4(+). It participates in amino-acid degradation; D-alanine degradation; NH(3) and pyruvate from D-alanine: step 1/1. Its function is as follows. Oxidative deamination of D-amino acids. This is D-amino acid dehydrogenase from Photorhabdus laumondii subsp. laumondii (strain DSM 15139 / CIP 105565 / TT01) (Photorhabdus luminescens subsp. laumondii).